Here is a 969-residue protein sequence, read N- to C-terminus: Poly(ADP-ribose) glycohydrolase (969 aa).

3 disordered regions span residues methionine 1 to threonine 149, histidine 161 to arginine 341, and asparagine 368 to aspartate 400. The tract at residues methionine 1–threonine 449 is A-domain. A Nuclear localization signal motif is present at residues cysteine 10–tryptophan 16. Residues asparagine 69–methionine 84 show a composition bias toward polar residues. The PIP-box (PCNA interacting peptide) signature appears at glutamine 77–methionine 84. The segment covering lysine 87 to asparagine 100 has biased composition (basic and acidic residues). Residues asparagine 101–lysine 113 are compositionally biased toward polar residues. Residues phenylalanine 116–glutamate 125 are compositionally biased toward basic and acidic residues. 2 stretches are compositionally biased toward polar residues: residues proline 128 to threonine 149 and glutamine 179 to proline 189. At serine 135 the chain carries Phosphoserine. Threonine 137 is modified (phosphothreonine). Positions histidine 190–asparagine 205 are enriched in basic and acidic residues. Serine 195 carries the post-translational modification Phosphoserine. Threonine 197 bears the Phosphothreonine mark. Polar residues predominate over residues alanine 226–glutamine 237. 7 positions are modified to phosphoserine: serine 256, serine 259, serine 281, serine 286, serine 293, serine 297, and serine 311. The span at lysine 275 to glycine 284 shows a compositional bias: polar residues. Positions serine 311–aspartate 325 are enriched in acidic residues. 2 stretches are compositionally biased toward polar residues: residues serine 329 to glutamine 339 and asparagine 369 to asparagine 387. N6-acetyllysine is present on lysine 334. Residues glutamine 603–tyrosine 788 form a catalytic region. Isoleucine 719–glutamate 720 is a substrate binding site. Aspartate 730 is an active-site residue. 2 residues coordinate substrate: asparagine 733 and glutamine 747. Residues glutamate 748 and glutamate 749 contribute to the active site. Residues tyrosine 788 and asparagine 862 to alanine 867 each bind substrate.

It belongs to the poly(ADP-ribose) glycohydrolase family. In terms of assembly, interacts with PCNA. Interacts with NUDT5.

It is found in the nucleus. The catalysed reaction is [(1''-&gt;2')-ADP-alpha-D-ribose](n) + H2O = [(1''-&gt;2')-ADP-alpha-D-ribose](n-1) + ADP-D-ribose. Functionally, poly(ADP-ribose) glycohydrolase that degrades poly(ADP-ribose) by hydrolyzing the ribose-ribose bonds present in poly(ADP-ribose). PARG acts both as an endo- and exoglycosidase, releasing poly(ADP-ribose) of different length as well as ADP-ribose monomers. It is however unable to cleave the ester bond between the terminal ADP-ribose and ADP-ribosylated residues, leaving proteins that are mono-ADP-ribosylated. Poly(ADP-ribose) is synthesized after DNA damage is only present transiently and is rapidly degraded by PARG. Required to prevent detrimental accumulation of poly(ADP-ribose) upon prolonged replicative stress, while it is not required for recovery from transient replicative stress. Responsible for the prevalence of mono-ADP-ribosylated proteins in cells, thanks to its ability to degrade poly(ADP-ribose) without cleaving the terminal protein-ribose bond. Required for retinoid acid-dependent gene transactivation, probably by removing poly(ADP-ribose) from histone demethylase KDM4D, allowing chromatin derepression at RAR-dependent gene promoters. Involved in the synthesis of ATP in the nucleus, together with PARP1, NMNAT1 and NUDT5. Nuclear ATP generation is required for extensive chromatin remodeling events that are energy-consuming. This is Poly(ADP-ribose) glycohydrolase from Mus musculus (Mouse).